The following is a 247-amino-acid chain: Probable 2-phosphosulfolactate phosphatase (247 aa).

This sequence belongs to the ComB family. It depends on Mg(2+) as a cofactor.

The catalysed reaction is (2R)-O-phospho-3-sulfolactate + H2O = (2R)-3-sulfolactate + phosphate. In Clostridium perfringens (strain 13 / Type A), this protein is Probable 2-phosphosulfolactate phosphatase.